The chain runs to 114 residues: NAD(P)H-quinone oxidoreductase subunit M (114 aa).

This sequence belongs to the complex I NdhM subunit family. As to quaternary structure, NDH-1 can be composed of about 15 different subunits; different subcomplexes with different compositions have been identified which probably have different functions.

Its subcellular location is the cellular thylakoid membrane. The catalysed reaction is a plastoquinone + NADH + (n+1) H(+)(in) = a plastoquinol + NAD(+) + n H(+)(out). It carries out the reaction a plastoquinone + NADPH + (n+1) H(+)(in) = a plastoquinol + NADP(+) + n H(+)(out). Functionally, NDH-1 shuttles electrons from an unknown electron donor, via FMN and iron-sulfur (Fe-S) centers, to quinones in the respiratory and/or the photosynthetic chain. The immediate electron acceptor for the enzyme in this species is believed to be plastoquinone. Couples the redox reaction to proton translocation, and thus conserves the redox energy in a proton gradient. Cyanobacterial NDH-1 also plays a role in inorganic carbon-concentration. The sequence is that of NAD(P)H-quinone oxidoreductase subunit M from Acaryochloris marina (strain MBIC 11017).